We begin with the raw amino-acid sequence, 765 residues long: Putative chloride channel-like protein CLC-g (765 aa).

The next 12 membrane-spanning stretches (helical) occupy residues 67-87 (VFMKWLLCFCIGIIVSLIGFA), 116-136 (FVVFSVTNLILTLFASVITAF), 167-187 (LIIKIIGNISAVSASLLIGKA), 190-210 (MVHTGACVASILGQGGSKRYR), 232-252 (GAAAGIAASFRAPVGGVLFAL), 262-282 (ALLWRIFFSTAVVAIVLRALI), 315-335 (VLPVLLLGVVGGILGSLYNFL), 355-375 (ILLACAISIFTSCLLFGLPFL), 438-458 (FSVLVFFVTCFFLSIFSYGIV), 462-482 (GLFVPVIVTGASYGRFVGMLL), 494-514 (AVLGAASFLGGTMRMTVSTCV), and 515-535 (ILLELTNNLLLLPMMMVVLLI). The CBS 1 domain occupies 568–640 (MRQLLVGDVV…LLKKRVFMPS (73 aa)). Ser-646 carries the post-translational modification Phosphoserine. The 62-residue stretch at 687 to 748 (FSNASPYTVV…PEHILGLHPS (62 aa)) folds into the CBS 2 domain. Residues 715 to 735 (HLLVIPKTSNRPPVVGILTRH) form a helical membrane-spanning segment.

The protein belongs to the chloride channel (TC 2.A.49) family. In terms of assembly, homodimer. Interacts with PP2A5.

The protein resides in the membrane. Functionally, putative voltage-gated chloride channel. The chain is Putative chloride channel-like protein CLC-g (CLC-G) from Arabidopsis thaliana (Mouse-ear cress).